We begin with the raw amino-acid sequence, 334 residues long: Glycerol-3-phosphate dehydrogenase [NAD(P)+] (334 aa).

The NADPH site is built by Tyr14 and Lys108. Residues Lys108, Gly140, and Ser142 each coordinate sn-glycerol 3-phosphate. An NADPH-binding site is contributed by Ala144. Sn-glycerol 3-phosphate is bound by residues Lys195, Asp248, Ser258, Arg259, and Asn260. Lys195 acts as the Proton acceptor in catalysis. Position 259 (Arg259) interacts with NADPH. An NADPH-binding site is contributed by Glu285.

It belongs to the NAD-dependent glycerol-3-phosphate dehydrogenase family.

The protein resides in the cytoplasm. The enzyme catalyses sn-glycerol 3-phosphate + NAD(+) = dihydroxyacetone phosphate + NADH + H(+). The catalysed reaction is sn-glycerol 3-phosphate + NADP(+) = dihydroxyacetone phosphate + NADPH + H(+). The protein operates within membrane lipid metabolism; glycerophospholipid metabolism. In terms of biological role, catalyzes the reduction of the glycolytic intermediate dihydroxyacetone phosphate (DHAP) to sn-glycerol 3-phosphate (G3P), the key precursor for phospholipid synthesis. This Mesoplasma florum (strain ATCC 33453 / NBRC 100688 / NCTC 11704 / L1) (Acholeplasma florum) protein is Glycerol-3-phosphate dehydrogenase [NAD(P)+].